A 247-amino-acid chain; its full sequence is uncharacterized protein (247 aa).

Residues 161-187 are disordered; that stretch reads KEQSDATSDATTSEKNKSPECPKATTE. Residues 172–187 are compositionally biased toward basic and acidic residues; the sequence is TSEKNKSPECPKATTE.

This is an uncharacterized protein from Mus musculus (Mouse).